The primary structure comprises 201 residues: UPF0301 protein MAP_0045 (201 aa).

It belongs to the UPF0301 (AlgH) family.

The sequence is that of UPF0301 protein MAP_0045 from Mycolicibacterium paratuberculosis (strain ATCC BAA-968 / K-10) (Mycobacterium paratuberculosis).